We begin with the raw amino-acid sequence, 92 residues long: UPF0728 protein C10orf53 homolog (92 aa).

The protein belongs to the UPF0728 family.

The chain is UPF0728 protein C10orf53 homolog from Danio rerio (Zebrafish).